A 1483-amino-acid polypeptide reads, in one-letter code: Heme-responsive zinc finger transcription factor HAP1 (1483 aa).

Over residues 1 to 50 (MSNTPYNSSVPSIASMTQSSVSRSPNMHTATTPGANTSSNSPPLHMSSDS) the composition is skewed to polar residues. The segment at 1 to 56 (MSNTPYNSSVPSIASMTQSSVSRSPNMHTATTPGANTSSNSPPLHMSSDSSKIKRK) is disordered. Residues C64, C67, C74, C81, C84, and C93 each contribute to the Zn(2+) site. The segment at residues 64–93 (CTICRKRKVKCDKLRPHCQQCTKTGVAHLC) is a DNA-binding region (zn(2)-C6 fungal-type). Residues 105 to 134 (EKELLKDNELKKLRERVKSLEKTLSKVHSS) adopt a coiled-coil conformation. A compositionally biased stretch (polar residues) spans 162–176 (VNANTGSASSASHMH). Residues 162-208 (VNANTGSASSASHMHQQQQQQQQQEQQQDFSRSANANANSSSLSISN) form a disordered region. Positions 177–208 (QQQQQQQQQEQQQDFSRSANANANSSSLSISN) are enriched in low complexity. Positions 244–444 (KGDPYLKLLW…NTIPHHQPQS (201 aa)) are heme-responsive; required for HMC formation. 6 HRM repeats span residues 280–285 (KCPINH), 299–304 (KCPVDH), 323–328 (KCPVDH), 347–352 (RCPVDH), 389–394 (KCPVDH), and 415–420 (RCPIDH). 2 stretches are compositionally biased toward polar residues: residues 432–447 (STHN…SGSH) and 706–734 (QLNA…NPTL). 2 disordered regions span residues 432–458 (STHN…NRKH) and 706–767 (QLNA…KENQ). Residues 735 to 759 (NNNMSAATTNSSSRSGSADSRSGSN) show a composition bias toward low complexity. The HRM 7 repeat unit spans residues 1192–1197 (KCPVYQ). Positions 1384–1411 (TANTDTSANGSALSTLTSPQGSDLASNS) are disordered. Positions 1388-1411 (DTSANGSALSTLTSPQGSDLASNS) are enriched in polar residues.

In terms of assembly, binds DNA as a homodimer. Interacts with SRO9 and YDJ1. In the absence of heme, binds to at least four cellular proteins, including YDJ1 and SRO9, forming a high-molecular-weight complex (HMC) which results in repression of its activity and dictates its DNA-binding specificity.

Its subcellular location is the nucleus. Its function is as follows. Regulation of oxygen dependent gene expression. It modulates the expression of Iso-1 (CYP1) and Iso-2 (CYP3) cytochrome c. In response to heme, promotes transcription of genes encoding functions required for respiration, controlling oxidative damage and repression of anaerobic genes. Binds to the sequence 5'-CGGNNNTNNCGG-3'. This chain is Heme-responsive zinc finger transcription factor HAP1 (HAP1), found in Saccharomyces cerevisiae (strain RM11-1a) (Baker's yeast).